The primary structure comprises 341 residues: Elongation factor Ts (341 aa).

Residues 80–83 (TDFV) are involved in Mg(2+) ion dislocation from EF-Tu.

Belongs to the EF-Ts family.

It localises to the cytoplasm. Associates with the EF-Tu.GDP complex and induces the exchange of GDP to GTP. It remains bound to the aminoacyl-tRNA.EF-Tu.GTP complex up to the GTP hydrolysis stage on the ribosome. The protein is Elongation factor Ts of Lactobacillus helveticus (strain DPC 4571).